A 727-amino-acid polypeptide reads, in one-letter code: ABC transporter G family member 6 (727 aa).

The region spanning 68-333 (LSFTDLTYSV…FAEFGHPIPE (266 aa)) is the ABC transporter domain. 126 to 133 (GASGSGKS) contacts ATP. Residues 421-631 (VELAVLAKRS…PYEAVLLNEF (211 aa)) form the ABC transmembrane type-2 domain. The next 6 membrane-spanning stretches (helical) occupy residues 440 to 460 (LFGI…TMFW), 475 to 495 (CFAF…PVFL), 517 to 537 (LSHS…FAAI), 560 to 580 (ASFW…PHVM), 581 to 601 (LGYT…GFFI), and 700 to 720 (LWVT…SLLL).

It belongs to the ABC transporter superfamily. ABCG family. Eye pigment precursor importer (TC 3.A.1.204) subfamily.

Its subcellular location is the membrane. This Arabidopsis thaliana (Mouse-ear cress) protein is ABC transporter G family member 6 (ABCG6).